Reading from the N-terminus, the 476-residue chain is Carbamoyl phosphate synthase arginine-specific small chain (476 aa).

Residues Met1–Leu24 constitute a mitochondrion transit peptide. In terms of domain architecture, Glutamine amidotransferase type-1 spans His228–His415. Catalysis depends on Cys304, which acts as the Nucleophile. Residues His388 and Glu390 contribute to the active site.

This sequence belongs to the CarA family. Heterodimer composed of 2 chains; the small (or glutamine) chain promotes the hydrolysis of glutamine to ammonia, which is used by the large (or ammonia) chain to synthesize carbamoyl phosphate.

Its subcellular location is the mitochondrion matrix. The catalysed reaction is hydrogencarbonate + L-glutamine + 2 ATP + H2O = carbamoyl phosphate + L-glutamate + 2 ADP + phosphate + 2 H(+). The enzyme catalyses L-glutamine + H2O = L-glutamate + NH4(+). Its pathway is amino-acid biosynthesis; L-arginine biosynthesis; carbamoyl phosphate from bicarbonate: step 1/1. Its function is as follows. Small subunit of the arginine-specific carbamoyl phosphate synthase (CPSase). CPSase catalyzes the formation of carbamoyl phosphate from the ammonia moiety of glutamine, carbonate, and phosphate donated by ATP, the first step of the arginine biosynthetic pathway. The small subunit (glutamine amidotransferase) binds and cleaves glutamine to supply the large subunit with the substrate ammonia. The chain is Carbamoyl phosphate synthase arginine-specific small chain (CPA1) from Phaeosphaeria nodorum (strain SN15 / ATCC MYA-4574 / FGSC 10173) (Glume blotch fungus).